The chain runs to 122 residues: Large ribosomal subunit protein uL14 (122 aa).

It belongs to the universal ribosomal protein uL14 family. In terms of assembly, part of the 50S ribosomal subunit. Forms a cluster with proteins L3 and L19. In the 70S ribosome, L14 and L19 interact and together make contacts with the 16S rRNA in bridges B5 and B8.

Binds to 23S rRNA. Forms part of two intersubunit bridges in the 70S ribosome. The sequence is that of Large ribosomal subunit protein uL14 from Halorhodospira halophila (strain DSM 244 / SL1) (Ectothiorhodospira halophila (strain DSM 244 / SL1)).